The sequence spans 956 residues: Translation initiation factor IF-2 (956 aa).

The segment at 33–370 is disordered; that stretch reads SHASSVEEAD…PVTERKFHEL (338 aa). Polar residues predominate over residues 46–60; it reads IASSFSAGVTKNVQA. Residues 63–73 show a composition bias toward basic and acidic residues; that stretch reads AKDKQVAEQKA. Residues 76 to 100 show a composition bias toward low complexity; the sequence is AKATTPQPAASKAAEKPAAATQEAS. 3 stretches are compositionally biased toward basic and acidic residues: residues 112–125, 134–143, and 179–192; these read FKAE…EQVA, SNDRKSDYRQ, and NDGH…DKNR. Low complexity predominate over residues 199–213; it reads RQQDTGRQGQTQAGA. Composition is skewed to basic and acidic residues over residues 234–258 and 266–276; these read ARQR…RQEA and QTEDKKHREAS. A compositionally biased stretch (low complexity) spans 277–293; it reads AKATESVASMAAASVAK. Positions 303–320 are enriched in basic and acidic residues; the sequence is NRPDKGHDRDHGLEDGQK. Low complexity predominate over residues 325–343; that stretch reads SWNSQNQVRNQKNSNWNNN. Residues 344–354 show a composition bias toward basic residues; it reads KKNKKGKHHKN. In terms of domain architecture, tr-type G spans 457-626; the sequence is ERAPVVTIMG…LLVAEVEELK (170 aa). The G1 stretch occupies residues 466–473; that stretch reads GHVDHGKT. A GTP-binding site is contributed by 466–473; the sequence is GHVDHGKT. The interval 491 to 495 is G2; sequence GITQH. The G3 stretch occupies residues 512–515; sequence DTPG. Residues 512-516 and 566-569 contribute to the GTP site; these read DTPGH and NKID. The G4 stretch occupies residues 566–569; sequence NKID. Positions 602-604 are G5; sequence SAK.

The protein belongs to the TRAFAC class translation factor GTPase superfamily. Classic translation factor GTPase family. IF-2 subfamily.

Its subcellular location is the cytoplasm. Its function is as follows. One of the essential components for the initiation of protein synthesis. Protects formylmethionyl-tRNA from spontaneous hydrolysis and promotes its binding to the 30S ribosomal subunits. Also involved in the hydrolysis of GTP during the formation of the 70S ribosomal complex. The sequence is that of Translation initiation factor IF-2 from Streptococcus equi subsp. equi (strain 4047).